We begin with the raw amino-acid sequence, 339 residues long: F420-dependent glucose-6-phosphate dehydrogenase (339 aa).

D41 is a binding site for coenzyme F420-(gamma-Glu)n. Catalysis depends on H42, which acts as the Proton donor. Residues T78 and 109–110 contribute to the coenzyme F420-(gamma-Glu)n site; that span reads TG. Catalysis depends on E111, which acts as the Proton acceptor. Coenzyme F420-(gamma-Glu)n contacts are provided by residues N114, 177–178, and 180–181; these read SG and AA. Residues T195, K198, K259, and R283 each contribute to the substrate site.

This sequence belongs to the F420-dependent glucose-6-phosphate dehydrogenase family. Homodimer.

It carries out the reaction oxidized coenzyme F420-(gamma-L-Glu)(n) + D-glucose 6-phosphate + H(+) = 6-phospho-D-glucono-1,5-lactone + reduced coenzyme F420-(gamma-L-Glu)(n). Its function is as follows. Catalyzes the coenzyme F420-dependent oxidation of glucose 6-phosphate (G6P) to 6-phosphogluconolactone. The chain is F420-dependent glucose-6-phosphate dehydrogenase from Nakamurella multipartita (strain ATCC 700099 / DSM 44233 / CIP 104796 / JCM 9543 / NBRC 105858 / Y-104) (Microsphaera multipartita).